A 65-amino-acid polypeptide reads, in one-letter code: Conotoxin Cal1.3 (65 aa).

The first 18 residues, 1 to 18, serve as a signal peptide directing secretion; that stretch reads MRCLPVFIILLLLASTAA. Positions 19–49 are excised as a propeptide; that stretch reads VDVAGSKLKRRLERKPYQGSQAYVKKTAFGL. Intrachain disulfides connect C52-C62 and C53-C59. P61 carries the post-translational modification 4-hydroxyproline. Cysteine amide is present on C62.

The protein belongs to the conotoxin T superfamily. As to expression, expressed by the venom duct.

The protein localises to the secreted. Probable neurotoxin with unknown target. Possibly targets ion channels. The protein is Conotoxin Cal1.3 of Californiconus californicus (California cone).